Here is a 167-residue protein sequence, read N- to C-terminus: RNA pyrophosphohydrolase (167 aa).

Residues 8–159 (PYRTCVGVML…KRPVYERVVK (152 aa)) form the Nudix hydrolase domain. The Nudix box signature appears at 47-68 (GGVDPGEDTWAAAKRELYEETS).

Belongs to the Nudix hydrolase family. RppH subfamily. The cofactor is a divalent metal cation.

Accelerates the degradation of transcripts by removing pyrophosphate from the 5'-end of triphosphorylated RNA, leading to a more labile monophosphorylated state that can stimulate subsequent ribonuclease cleavage. The polypeptide is RNA pyrophosphohydrolase (Bradyrhizobium diazoefficiens (strain JCM 10833 / BCRC 13528 / IAM 13628 / NBRC 14792 / USDA 110)).